Consider the following 341-residue polypeptide: L-threonine 3-dehydrogenase (341 aa).

Cys-38 is a binding site for Zn(2+). Residues Thr-40 and His-43 each act as charge relay system in the active site. Residues His-63, Glu-64, Cys-93, Cys-96, Cys-99, and Cys-107 each coordinate Zn(2+). Residues Ile-175, Asp-195, Arg-200, 262–264, and 286–287 each bind NAD(+); these read LGI and IY.

The protein belongs to the zinc-containing alcohol dehydrogenase family. In terms of assembly, homotetramer. The cofactor is Zn(2+).

Its subcellular location is the cytoplasm. The catalysed reaction is L-threonine + NAD(+) = (2S)-2-amino-3-oxobutanoate + NADH + H(+). It functions in the pathway amino-acid degradation; L-threonine degradation via oxydo-reductase pathway; glycine from L-threonine: step 1/2. Its function is as follows. Catalyzes the NAD(+)-dependent oxidation of L-threonine to 2-amino-3-ketobutyrate. The polypeptide is L-threonine 3-dehydrogenase (Serratia proteamaculans (strain 568)).